The chain runs to 285 residues: MDDFVSESESDYASYWRDWFISSRGNEYFCEIDEDYITDRFNLTGLNTEVQYYQYALDLITDVFDLDCDDDMRETIEKSARHLYGLVHARYIVTTRGLQKMFEKYKKADFGKCPRVMCSSHPLLPMGLSDVPNSKPVKLYCARCEDIYNPKSSRHAAIDGAYFGTSFHNIFFQVYPTLVPAKSVERYIPRCYGFKVHAAAALVRWQNSQRDEMRRRLRKLEVESGFKDAEDEAELDDDDEEEEEEEEEEEELAAMDEAEGAQQQHAAAAAGTATGGVAAGGEGVH.

Positions 226-285 (FKDAEDEAELDDDDEEEEEEEEEEEELAAMDEAEGAQQQHAAAAAGTATGGVAAGGEGVH) are disordered. Over residues 229-259 (AEDEAELDDDDEEEEEEEEEEEELAAMDEAE) the composition is skewed to acidic residues. A compositionally biased stretch (low complexity) spans 260–272 (GAQQQHAAAAAGT). Positions 273–285 (ATGGVAAGGEGVH) are enriched in gly residues.

It belongs to the casein kinase 2 subunit beta family. In terms of assembly, tetramer composed of two alpha chains, one beta chain and one beta' chain. Post-translationally, phosphorylated by alpha subunit.

Its function is as follows. Regulatory subunit of casein kinase II/CK2. As part of the kinase complex regulates the basal catalytic activity of the alpha subunit a constitutively active serine/threonine-protein kinase that phosphorylates a large number of substrates containing acidic residues C-terminal to the phosphorylated serine or threonine. This chain is Casein kinase II subunit beta-2 (ckb-2), found in Neurospora crassa (strain ATCC 24698 / 74-OR23-1A / CBS 708.71 / DSM 1257 / FGSC 987).